The following is a 645-amino-acid chain: Zinc finger protein 64 (645 aa).

C2H2-type zinc fingers lie at residues 175-197, 203-225, and 231-253; these read HKCE…MRCH, YKCK…LRIH, and FKCQ…LRSH. Residue E286 forms a Glycyl lysine isopeptide (Lys-Gly) (interchain with G-Cter in SUMO2) linkage. The segment at 299 to 324 adopts a C2H2-type 4; atypical zinc-finger fold; sequence FNCCYPGCHFKTVHGMKDLDRHLRIH. 9 C2H2-type zinc fingers span residues 330–352, 358–380, 386–408, 414–436, 442–465, 467–489, 495–517, 523–546, and 580–602; these read HKCE…MRCH, HKCH…LRIH, YKCQ…LRSH, FQCW…MIVH, FKCE…RIKH, FKCL…SRLH, EKCP…SRVH, FKCD…DKVH, and FRCE…KKQH. Residue N397 forms a Glycyl lysine isopeptide (Lys-Gly) (interchain with G-Cter in SUMO2) linkage. Composition is skewed to basic and acidic residues over residues 543–554 and 600–610; these read DKVHRDEAKTEN and KQHSDQSENKN. Disordered stretches follow at residues 543–567 and 600–645; these read DKVH…REGS and KQHS…SQDL. V545 carries the post-translational modification Phosphoserine. The span at 622–631 shows a compositional bias: polar residues; it reads ASGQLSTLVS.

The protein belongs to the krueppel C2H2-type zinc-finger protein family. Interacts with ZNF70; this interaction promote the transactivation of the HES1 gene. Interacts with NOTCH1.

The protein localises to the nucleus. Its function is as follows. May be involved in the regulation of mesenchymal cell differentiation through transactivation of NOTCH1 target genes. The protein is Zinc finger protein 64 of Homo sapiens (Human).